Consider the following 1169-residue polypeptide: Phospholipid-transporting ATPase IF (1169 aa).

Topologically, residues 1–47 (LGFDPPHQSDTRTIYIANRFPQNGLYTPQKFIDNRIISSKYTVWNFV) are cytoplasmic. Residues 48–69 (PKNLFEQFRRVANFYFLIIFLV) traverse the membrane as a helical segment. At 70–74 (QLMID) the chain is on the extracellular side. Residues 75-96 (TPTSPITSGLPLFFVITVTAIK) form a helical membrane-spanning segment. Over 97 to 281 (QGYEDWLRHN…SAVEKSMNTF (185 aa)) the chain is Cytoplasmic. A helical transmembrane segment spans residues 282 to 303 (LIIYLIILISEAIISTILKYTW). Residues 304 to 333 (QAEEKWDEPWYNQKTEHQRNSSKILRFISD) lie on the Extracellular side of the membrane. The chain crosses the membrane as a helical span at residues 334–351 (FLAFLVLYNFIIPISLYV). At 352–868 (TVEMQKFLGS…HGHFYYIRIA (517 aa)) the chain is on the cytoplasmic side. The active-site 4-aspartylphosphate intermediate is D399. Residues D399, K400, T401, E523, F564, K587, R618, T698, G699, D700, R786, and K792 each coordinate ATP. D399 is a binding site for Mg(2+). A Mg(2+)-binding site is contributed by T401. A required for binding to the RING-finger of HLTF region spans residues 794 to 802 (KVIRLIKIS). Residue D813 coordinates Mg(2+). Positions 816 and 817 each coordinate ATP. D817 provides a ligand contact to Mg(2+). Residues 869 to 890 (TLVQYFFYKNVCFITPQFLYQF) form a helical membrane-spanning segment. At 891-902 (YCLFSQQTLYDS) the chain is on the extracellular side. A helical membrane pass occupies residues 903–922 (VYLTLYNICFTSLPILIYSL). At 923-952 (LEQHIDPHILQNKPTLYRDISKNRLLSIKT) the chain is on the cytoplasmic side. The chain crosses the membrane as a helical span at residues 953–974 (FLYWTILGFSRSFIFLFGSYFL). Residues 975 to 989 (IGKDASLLGNGQMFG) lie on the Extracellular side of the membrane. The chain crosses the membrane as a helical span at residues 990–1012 (NWTFGTLVFTVMVITVTVKMALE). Over 1013-1017 (THFWT) the chain is Cytoplasmic. Residues 1018-1039 (WINHLVTWGSIIFYFVFSLFYG) form a helical membrane-spanning segment. The Extracellular segment spans residues 1040-1057 (GILWPFLGSQNMYFVFIQ). The helical transmembrane segment at 1058–1082 (LVSSGSAWFAIILMVVTCLFLDVMK) threads the bilayer. Over 1083–1169 (KVFDRQLHPT…TLSTMDSSTC (87 aa)) the chain is Cytoplasmic. S1146 bears the Phosphoserine mark.

This sequence belongs to the cation transport ATPase (P-type) (TC 3.A.3) family. Type IV subfamily. Component of a P4-ATPase flippase complex which consists of a catalytic alpha subunit ATP11B and an accessory beta subunit TMEM30A. In terms of assembly, interacts with HLTF (via the RING-finger). Mg(2+) is required as a cofactor. Ubiquitously expressed.

It localises to the recycling endosome membrane. The protein resides in the early endosome. Its subcellular location is the endoplasmic reticulum. It is found in the golgi apparatus. The protein localises to the trans-Golgi network. It localises to the nucleus inner membrane. The enzyme catalyses ATP + H2O + phospholipidSide 1 = ADP + phosphate + phospholipidSide 2.. It catalyses the reaction a 1,2-diacyl-sn-glycero-3-phospho-L-serine(out) + ATP + H2O = a 1,2-diacyl-sn-glycero-3-phospho-L-serine(in) + ADP + phosphate + H(+). The catalysed reaction is a 1,2-diacyl-sn-glycero-3-phosphoethanolamine(out) + ATP + H2O = a 1,2-diacyl-sn-glycero-3-phosphoethanolamine(in) + ADP + phosphate + H(+). Functionally, catalytic component of a P4-ATPase flippase complex which catalyzes the hydrolysis of ATP coupled to the transport of aminophospholipids, phosphatidylserines (PS) and phosphatidylethanolamines (PE), from the outer to the inner leaflet of intracellular membranes. May contribute to the maintenance of membrane lipid asymmetry in endosome compartment. Its function is as follows. Appears to play a role in the subnuclear trafficking of transcription factors with RING motifs. The chain is Phospholipid-transporting ATPase IF (ATP11B) from Oryctolagus cuniculus (Rabbit).